Here is a 340-residue protein sequence, read N- to C-terminus: 3-hydroxybenzoate synthase (340 aa).

Residues Tyr147, Arg154, Tyr207, and Arg220 each contribute to the substrate site. Residue Glu334 is the Proton acceptor of the active site.

The protein belongs to the FkbO/Hyg5 family. Trimer.

The enzyme catalyses chorismate = 3-hydroxybenzoate + pyruvate. Its function is as follows. Involved in the biosynthesis of BC325, a rapamycin analog containing a 3-hydroxybenzoate starter unit. Catalyzes the hydrolysis of chorismate via an intramolecular mechanism to yield 3-hydroxybenzoate (3HBA). The chain is 3-hydroxybenzoate synthase from Streptomyces hygroscopicus.